A 487-amino-acid chain; its full sequence is Histamine H1 receptor (487 aa).

At 1 to 29 (MSLPNSSCLLEDKMCEGNKTTMASPQLMP) the chain is on the extracellular side. Residues Asn5 and Asn18 are each glycosylated (N-linked (GlcNAc...) asparagine). Residues 30-50 (LVVVLSTICLVTVGLNLLVLY) form a helical membrane-spanning segment. Residues 51 to 64 (AVRSERKLHTVGNL) lie on the Cytoplasmic side of the membrane. A helical transmembrane segment spans residues 65-89 (YIVSLSVADLIVGAVVMPMNILYLL). Over 90-97 (MSKWSLGR) the chain is Extracellular. Residues 98–123 (PLCLFWLSMDYVASTASIFSVFILCI) traverse the membrane as a helical segment. Residues Cys100 and Cys180 are joined by a disulfide bond. The histamine site is built by Asp107 and Thr112. An important for agonist binding region spans residues 107 to 112 (DYVAST). The Cytoplasmic portion of the chain corresponds to 124–144 (DRYRSVQQPLRYLKYRTKTRA). A phosphothreonine mark is found at Thr140 and Thr142. Residues 145-164 (SATILGAWFLSFLWVIPILG) traverse the membrane as a helical segment. The Extracellular portion of the chain corresponds to 165–188 (WNHFMQQTSVRREDKCETDFYDVT). A helical transmembrane segment spans residues 189–211 (WFKVMTAIINFYLPTLLMLWFYA). Residue Asn198 participates in histamine binding. The Cytoplasmic portion of the chain corresponds to 212-416 (KIYKAVRQHC…MNRERKAAKQ (205 aa)). Ser230 is modified (phosphoserine). A compositionally biased stretch (basic and acidic residues) spans 238–261 (KLRPENPKGDAKKPGKESPWEVLK). Residues 238–292 (KLRPENPKGDAKKPGKESPWEVLKRKPKDAGGGSVLKSPSQTXKEMKSPVVFSQE) form a disordered region. Thr279 is modified (phosphothreonine). Residues Ser344 and Ser347 each carry the phosphoserine modification. The disordered stretch occupies residues 345–379 (EISEDQMLGDSQSFSRTDSDTTTETAPGKGKLRSG). Polar residues predominate over residues 353–369 (GDSQSFSRTDSDTTTET). Phosphoserine is present on residues Ser380, Ser396, and Ser398. The helical transmembrane segment at 417 to 440 (LGFIMAAFILCWIPYFIFFMVIAF) threads the bilayer. An important for agonist binding region spans residues 424 to 428 (FILCW). Tyr431 lines the histamine pocket. Cys441 and Cys444 are oxidised to a cystine. At 441-446 (CKNCCN) the chain is on the extracellular side. A helical membrane pass occupies residues 447–469 (EHLHMFTIWLGYINSTLNPLIYP). The Cytoplasmic segment spans residues 470 to 487 (LCNENFKKTFKRILHIRS).

It belongs to the G-protein coupled receptor 1 family. In terms of processing, phosphorylation at sites in the second and third cytoplasmic loops independently contribute to agonist-induced receptor down-regulation.

The protein resides in the cell membrane. G-protein-coupled receptor for histamine, a biogenic amine that functions as an immune modulator and a neurotransmitter. Through the H1 receptor, histamine mediates the contraction of smooth muscles and increases capillary permeability due to contraction of terminal venules. Also mediates neurotransmission in the central nervous system and thereby regulates circadian rhythms, emotional and locomotor activities as well as cognitive functions. The chain is Histamine H1 receptor from Pan troglodytes (Chimpanzee).